Reading from the N-terminus, the 342-residue chain is Dihydroorotate dehydrogenase (quinone) (342 aa).

Residues 61–65 (AGLDK) and Thr-85 each bind FMN. Lys-65 serves as a coordination point for substrate. 110–114 (NRMGF) contacts substrate. Residues Asn-138 and Asn-171 each coordinate FMN. Substrate is bound at residue Asn-171. Ser-174 (nucleophile) is an active-site residue. Asn-176 provides a ligand contact to substrate. The FMN site is built by Lys-216 and Thr-244. 245 to 246 (NT) contacts substrate. FMN-binding positions include Gly-267, Gly-296, and 317–318 (YS).

Belongs to the dihydroorotate dehydrogenase family. Type 2 subfamily. As to quaternary structure, monomer. FMN is required as a cofactor.

Its subcellular location is the cell membrane. The enzyme catalyses (S)-dihydroorotate + a quinone = orotate + a quinol. The protein operates within pyrimidine metabolism; UMP biosynthesis via de novo pathway; orotate from (S)-dihydroorotate (quinone route): step 1/1. Its function is as follows. Catalyzes the conversion of dihydroorotate to orotate with quinone as electron acceptor. The sequence is that of Dihydroorotate dehydrogenase (quinone) from Pseudomonas paraeruginosa (strain DSM 24068 / PA7) (Pseudomonas aeruginosa (strain PA7)).